A 184-amino-acid polypeptide reads, in one-letter code: uncharacterized protein (184 aa).

This is an uncharacterized protein from Haemophilus influenzae (strain ATCC 51907 / DSM 11121 / KW20 / Rd).